Consider the following 483-residue polypeptide: 5-hydroxytryptamine receptor 3A (483 aa).

The first 23 residues, 1–23 (MPLCIPQVLLALFLSVLIAQGEG), serve as a signal peptide directing secretion. The Extracellular portion of the chain corresponds to 24-246 (SRRRATQAHS…MKFYVVIRRR (223 aa)). Residues N109, N175, and N191 are each glycosylated (N-linked (GlcNAc...) asparagine). An intrachain disulfide couples C162 to C176. A helical membrane pass occupies residues 247–273 (PLFYAVSLLLPSIFLMVVDIVGFCLPP). Residues 274-278 (DSGER) are Cytoplasmic-facing. A helical transmembrane segment spans residues 279–297 (VSFKITLLLGYSVFLIIVS). The Extracellular portion of the chain corresponds to 298–307 (DTLPATAIGT). The chain crosses the membrane as a helical span at residues 308–326 (PLIGVYFVVCMALLVISLA). At 327-460 (ETIFIVQLVH…GYVLDRLLFR (134 aa)) the chain is on the cytoplasmic side. The disordered stretch occupies residues 393–414 (VGSPQDLEKTSRSRDSPLPPPR). Basic and acidic residues predominate over residues 398 to 407 (DLEKTSRSRD). Residues 419–455 (AVRGLLQELSSIRHSLEKRDEMREVARDWLRVGYVLD) form an HA-stretch; determines single-channel conductance in 5-HT3 receptors region. The helical transmembrane segment at 461–480 (IYLLAVLAYSITLVTLWSIW) threads the bilayer. Residues 481–483 (HYS) are Extracellular-facing.

The protein belongs to the ligand-gated ion channel (TC 1.A.9) family. 5-hydroxytryptamine receptor (TC 1.A.9.2) subfamily. HTR3A sub-subfamily. Forms homopentameric as well as heteropentameric serotonin-activated cation-selective channel complexes with HTR3B or HTR3C or HTR3D or HTR3E. The homomeric complex is functional but exhibits low conductance with modified voltage dependence, and decreased agonist and antagonist affinity. Heteropentameric complexes display properties which resemble that of neuronal serotonin-activated channels in vivo. Interacts with RIC3. In terms of tissue distribution, expressed in central and peripheral neurons.

Its subcellular location is the postsynaptic cell membrane. It is found in the cell membrane. The enzyme catalyses Na(+)(in) = Na(+)(out). It catalyses the reaction K(+)(in) = K(+)(out). The catalysed reaction is Ca(2+)(in) = Ca(2+)(out). It carries out the reaction Mg(2+)(in) = Mg(2+)(out). Functionally, forms serotonin (5-hydroxytryptamine/5-HT3)-activated cation-selective channel complexes, which when activated cause fast, depolarizing responses in neurons. This is 5-hydroxytryptamine receptor 3A from Rattus norvegicus (Rat).